The primary structure comprises 274 residues: 2,3,4,5-tetrahydropyridine-2,6-dicarboxylate N-succinyltransferase (274 aa).

Residues arginine 104 and aspartate 141 each contribute to the substrate site.

This sequence belongs to the transferase hexapeptide repeat family. As to quaternary structure, homotrimer.

Its subcellular location is the cytoplasm. It carries out the reaction (S)-2,3,4,5-tetrahydrodipicolinate + succinyl-CoA + H2O = (S)-2-succinylamino-6-oxoheptanedioate + CoA. Its pathway is amino-acid biosynthesis; L-lysine biosynthesis via DAP pathway; LL-2,6-diaminopimelate from (S)-tetrahydrodipicolinate (succinylase route): step 1/3. In Salmonella arizonae (strain ATCC BAA-731 / CDC346-86 / RSK2980), this protein is 2,3,4,5-tetrahydropyridine-2,6-dicarboxylate N-succinyltransferase.